The chain runs to 751 residues: Dual specificity tyrosine-phosphorylation-regulated kinase 1A (751 aa).

The segment covering 59–68 (YNDQIQQPLP) has biased composition (polar residues). 2 disordered regions span residues 59–81 (YNDQ…RDPA) and 104–129 (YAKK…KVYN). The Bipartite nuclear localization signal motif lies at 109–126 (RRHQQGQGDDSSHKKERK). One can recognise a Protein kinase domain in the interval 151–471 (YEIDSLIGKG…PYYALQHSFF (321 aa)). ATP-binding positions include 157-165 (IGKGSFGQV), lysine 180, and 230-233 (FEML). The Proton acceptor role is filled by aspartate 279. Polar residues predominate over residues 477–493 (EGTNTSNSVSTSPAMEQ). Disordered stretches follow at residues 477–532 (EGTN…HSGG), 580–667 (HVPS…GNQA), and 730–751 (GMDR…VASS). Low complexity predominate over residues 494 to 517 (SQSSGTTSSTSSSSGGSSGTSNSG). A histidine-rich domain (HRD) region spans residues 585–613 (QQNVPHHHGNGSHHHHHHHHHHHGQHVLS). The segment covering 589 to 609 (PHHHGNGSHHHHHHHHHHHGQ) has biased composition (basic residues). Over residues 611–622 (VLSNRTRTRIYN) the composition is skewed to polar residues. Composition is skewed to low complexity over residues 623-633 (SPSTSSSTQDS) and 642-660 (SMTS…SSST). The span at 742 to 751 (CVQQSPVASS) shows a compositional bias: polar residues.

Belongs to the protein kinase superfamily. CMGC Ser/Thr protein kinase family. MNB/DYRK subfamily. Autophosphorylated on tyrosine residues.

It is found in the nucleus. Its subcellular location is the nucleus speckle. It catalyses the reaction L-seryl-[protein] + ATP = O-phospho-L-seryl-[protein] + ADP + H(+). The enzyme catalyses L-threonyl-[protein] + ATP = O-phospho-L-threonyl-[protein] + ADP + H(+). It carries out the reaction L-tyrosyl-[protein] + ATP = O-phospho-L-tyrosyl-[protein] + ADP + H(+). The catalysed reaction is [DNA-directed RNA polymerase] + ATP = phospho-[DNA-directed RNA polymerase] + ADP + H(+). In terms of biological role, dual-specificity kinase which possesses both serine/threonine and tyrosine kinase activities. Exhibits a substrate preference for proline at position P+1 and arginine at position P-3. Plays an important role in double-strand breaks (DSBs) repair following DNA damage. Mechanistically, phosphorylates RNF169 and increases its ability to block accumulation of TP53BP1 at the DSB sites thereby promoting homologous recombination repair (HRR). Also acts as a positive regulator of transcription by acting as a CTD kinase that mediates phosphorylation of the CTD (C-terminal domain) of the large subunit of RNA polymerase II (RNAP II) POLR2A. Modulates alternative splicing by phosphorylating the splice factor SRSF6. Phosphorylates SEPTIN4, SEPTIN5 and SF3B1. This is Dual specificity tyrosine-phosphorylation-regulated kinase 1A from Xenopus tropicalis (Western clawed frog).